A 382-amino-acid chain; its full sequence is MQQRQSILWGAVATLMWAGLAHAGEASPVDPLRPVVDASIQPLLKEHRIPGMAVAVLKDGKAHYFNYGVANRESGAGVSEQTLFEIGSVSKTLTATLGAYAVVKGAMQLDDKASRHAPWLKGSAFDSITMGELATYSAGGLPLQFPEEVDSSEKMRAYYRQWAPVYSPGSHRQYSNPSIGLFGHLAASSLKQPFAPLMEQTLLPGLGMHHTYVNVPKQAMASYAYGYSKEDKPIRVNPGMLADEAYGIKTSSADLLRFVKANIGGVDDKALQQAISLTHQGHYSVGGMTQGLGWESYAYPVTEQTLLAGNSAKVILEANPTAAPRESGSQVLFNKTGSTNGFGAYVAFVPARGIGIVMLANRNYPIEARIKAAHAILAQLAG.

Positions 1–23 (MQQRQSILWGAVATLMWAGLAHA) are cleaved as a signal peptide. Ser-88 serves as the catalytic Acyl-ester intermediate. Ser-88 is an AMP binding site. 6 residues coordinate GMP: Ser-88, Gln-144, Tyr-174, Thr-336, Ser-338, and Asn-363. Residues Ser-88, Gln-144, Tyr-174, Thr-336, Ser-338, and Asn-363 each coordinate IMP. Tyr-174 lines the AMP pocket. Ser-338 is a binding site for AMP.

It belongs to the class-C beta-lactamase family. Monomer.

The enzyme catalyses a beta-lactam + H2O = a substituted beta-amino acid. With respect to regulation, inhibited by various nucleotides in vitro, including adenosine 5'-(P-acetyl)monophosphate (acAMP), inosine-5'-monophosphate (IMP) and guanosine-5'-monophosphate (GMP); IMP and GMP exhibit strongest competitive inhibition. Inhibited by the beta-lactamase-blocking agent, avibactam. Inhibited by clavulanic acid. Weakly inhibited by citric acid. Functionally, class C beta-lactamase which confers resistance to penicillins and cephalosporins. Has benzylpenicillin-, ceftazidime-, nitrocefin- and imipenem-hydrolyzing activity. In Klebsiella aerogenes (Enterobacter aerogenes), this protein is Beta-lactamase CMY-10.